The following is a 415-amino-acid chain: Serine hydroxymethyltransferase (415 aa).

(6S)-5,6,7,8-tetrahydrofolate contacts are provided by residues Leu121 and 125 to 127 (GHL). Lys230 carries the post-translational modification N6-(pyridoxal phosphate)lysine. 355–357 (SPF) lines the (6S)-5,6,7,8-tetrahydrofolate pocket.

The protein belongs to the SHMT family. Homodimer. Pyridoxal 5'-phosphate serves as cofactor.

Its subcellular location is the cytoplasm. The catalysed reaction is (6R)-5,10-methylene-5,6,7,8-tetrahydrofolate + glycine + H2O = (6S)-5,6,7,8-tetrahydrofolate + L-serine. It functions in the pathway one-carbon metabolism; tetrahydrofolate interconversion. Its pathway is amino-acid biosynthesis; glycine biosynthesis; glycine from L-serine: step 1/1. Catalyzes the reversible interconversion of serine and glycine with tetrahydrofolate (THF) serving as the one-carbon carrier. This reaction serves as the major source of one-carbon groups required for the biosynthesis of purines, thymidylate, methionine, and other important biomolecules. Also exhibits THF-independent aldolase activity toward beta-hydroxyamino acids, producing glycine and aldehydes, via a retro-aldol mechanism. The sequence is that of Serine hydroxymethyltransferase from Lactococcus lactis subsp. cremoris (strain MG1363).